The sequence spans 133 residues: ATP synthase epsilon chain (133 aa).

It belongs to the ATPase epsilon chain family. In terms of assembly, F-type ATPases have 2 components, CF(1) - the catalytic core - and CF(0) - the membrane proton channel. CF(1) has five subunits: alpha(3), beta(3), gamma(1), delta(1), epsilon(1). CF(0) has three main subunits: a, b and c.

The protein resides in the cell membrane. Functionally, produces ATP from ADP in the presence of a proton gradient across the membrane. The sequence is that of ATP synthase epsilon chain from Clostridium perfringens (strain ATCC 13124 / DSM 756 / JCM 1290 / NCIMB 6125 / NCTC 8237 / Type A).